Reading from the N-terminus, the 188-residue chain is Inner kinetochore subunit cnl2 (188 aa).

The protein belongs to the NKP2 family. In terms of assembly, component of the inner kinetochore constitutive centromere-associated network (CCAN) (also known as central kinetochore Sim4 complex in fission yeast), which is composed of at least cnl2, cnp3, cnp20, fta1, fta2, fta3, fta4, fta6, fta7, mal2, mhf1, mhf2, mis6, mis15, mis17, sim4 and wip1.

It localises to the cytoplasm. It is found in the nucleus. The protein localises to the chromosome. The protein resides in the centromere. Its subcellular location is the kinetochore. Component of the kinetochore, a multiprotein complex that assembles on centromeric DNA and attaches chromosomes to spindle microtubules, mediating chromosome segregation and sister chromatid segregation during meiosis and mitosis. Component of the inner kinetochore constitutive centromere-associated network (CCAN), which serves as a structural platform for outer kinetochore assembly. The chain is Inner kinetochore subunit cnl2 (cnl2) from Schizosaccharomyces pombe (strain 972 / ATCC 24843) (Fission yeast).